The following is a 466-amino-acid chain: UDP-N-acetylmuramoylalanine--D-glutamate ligase (466 aa).

128–134 contacts ATP; the sequence is GTNGKST.

This sequence belongs to the MurCDEF family.

The protein resides in the cytoplasm. It catalyses the reaction UDP-N-acetyl-alpha-D-muramoyl-L-alanine + D-glutamate + ATP = UDP-N-acetyl-alpha-D-muramoyl-L-alanyl-D-glutamate + ADP + phosphate + H(+). It functions in the pathway cell wall biogenesis; peptidoglycan biosynthesis. Cell wall formation. Catalyzes the addition of glutamate to the nucleotide precursor UDP-N-acetylmuramoyl-L-alanine (UMA). This chain is UDP-N-acetylmuramoylalanine--D-glutamate ligase, found in Bartonella henselae (strain ATCC 49882 / DSM 28221 / CCUG 30454 / Houston 1) (Rochalimaea henselae).